A 207-amino-acid chain; its full sequence is Probable flagellin 2 (207 aa).

The propeptide occupies 1 to 14; it reads MRVGSRKLRRDEKG.

This sequence belongs to the archaeal flagellin family.

It is found in the archaeal flagellum. Functionally, flagellin is the subunit protein which polymerizes to form the filaments of archaeal flagella. This chain is Probable flagellin 2 (flaB2), found in Archaeoglobus fulgidus (strain ATCC 49558 / DSM 4304 / JCM 9628 / NBRC 100126 / VC-16).